A 346-amino-acid polypeptide reads, in one-letter code: Protein RecA (346 aa).

66 to 73 is an ATP binding site; the sequence is GPESSGKT.

This sequence belongs to the RecA family.

It is found in the cytoplasm. Can catalyze the hydrolysis of ATP in the presence of single-stranded DNA, the ATP-dependent uptake of single-stranded DNA by duplex DNA, and the ATP-dependent hybridization of homologous single-stranded DNAs. It interacts with LexA causing its activation and leading to its autocatalytic cleavage. In Aromatoleum aromaticum (strain DSM 19018 / LMG 30748 / EbN1) (Azoarcus sp. (strain EbN1)), this protein is Protein RecA.